The sequence spans 536 residues: Probable monofunctional riboflavin biosynthesis protein RIBA 3, chloroplastic (536 aa).

A chloroplast-targeting transit peptide spans 1–43; the sequence is MDRVLLSSQLSSQTVVNTRVQQGSGGINSIGFAVIRKGSLKLR. Residues 44-310 form an inactive DHBP synthase region; it reads CYAIGGLGGG…IADLIRYRRK (267 aa). Residues 133-134, aspartate 138, and 248-252 contribute to the D-ribulose 5-phosphate site; these read GD and RAGHT. The interval 311-536 is GTP cyclohydrolase II; it reads REKLVELIAV…GDQDEDDTHN (226 aa). Position 361–365 (361–365) interacts with GTP; sequence RVHSE. Residues cysteine 366, cysteine 377, and cysteine 379 each contribute to the Zn(2+) site. Residues glutamine 382, 405-407, and threonine 427 each bind GTP; that span reads EGR. The active-site Proton acceptor; for GTP cyclohydrolase activity is the aspartate 439. Residue arginine 441 is the Nucleophile; for GTP cyclohydrolase activity of the active site. Positions 462 and 467 each coordinate GTP. Positions 507–536 are disordered; the sequence is YGSDLPGNVPEEFLNPDDIAGDQDEDDTHN. Residues 525–536 show a composition bias toward acidic residues; the sequence is IAGDQDEDDTHN.

This sequence in the N-terminal section; belongs to the DHBP synthase family. In the C-terminal section; belongs to the GTP cyclohydrolase II family. Requires Zn(2+) as cofactor.

The protein localises to the plastid. The protein resides in the chloroplast. It catalyses the reaction GTP + 4 H2O = 2,5-diamino-6-hydroxy-4-(5-phosphoribosylamino)-pyrimidine + formate + 2 phosphate + 3 H(+). Its pathway is cofactor biosynthesis; riboflavin biosynthesis; 5-amino-6-(D-ribitylamino)uracil from GTP: step 1/4. Its function is as follows. Involved in riboflavin biosynthesis. Catalyzes the conversion of GTP to 2,5-diamino-6-ribosylamino-4(3H)-pyrimidinone 5'-phosphate (DARP), formate and pyrophosphate. This is Probable monofunctional riboflavin biosynthesis protein RIBA 3, chloroplastic (RIBA3) from Oryza sativa subsp. japonica (Rice).